The following is a 192-amino-acid chain: MMKIGVLGLQGAVQEHVRSIEACGAEAVVVKKIEQLEEIDGLILPGGESTTMRRLMDKYGFIEPLKQFAAAGKPMFGTCAGLILLAKRIVGYDEPHLGLMDITVERNSFGRQRESFEAELSIAGVADDFIGVFIRAPHIVEVGEDVEVLAKYEGRIVAARQGQFLGCSFHPELTDDYRMTQYFLNMVKEAKA.

Residue 47 to 49 (GES) participates in L-glutamine binding. Residue Cys79 is the Nucleophile of the active site. Residues Arg106 and 134-135 (IR) each bind L-glutamine. Active-site charge relay system residues include His170 and Glu172.

Belongs to the glutaminase PdxT/SNO family. As to quaternary structure, in the presence of PdxS, forms a dodecamer of heterodimers. Only shows activity in the heterodimer.

The catalysed reaction is aldehydo-D-ribose 5-phosphate + D-glyceraldehyde 3-phosphate + L-glutamine = pyridoxal 5'-phosphate + L-glutamate + phosphate + 3 H2O + H(+). It carries out the reaction L-glutamine + H2O = L-glutamate + NH4(+). It functions in the pathway cofactor biosynthesis; pyridoxal 5'-phosphate biosynthesis. In terms of biological role, catalyzes the hydrolysis of glutamine to glutamate and ammonia as part of the biosynthesis of pyridoxal 5'-phosphate. The resulting ammonia molecule is channeled to the active site of PdxS. In Geobacillus sp. (strain WCH70), this protein is Pyridoxal 5'-phosphate synthase subunit PdxT.